The chain runs to 432 residues: Bouquet formation protein 4 (432 aa).

The segment at 1–21 (MTENEKSRSLPAERNPLYKDD) is disordered. Residues 38–147 (EFPDGPATFV…SSTPSTYATP (110 aa)) form the HTH APSES-type domain. Residues 73–94 (ATSMFRSAFPKATQEEEDLEMR) constitute a DNA-binding region (H-T-H motif). 2 stretches are compositionally biased toward low complexity: residues 139–152 (STPS…RPTA) and 163–172 (ESSTSATTTS). 2 disordered regions span residues 139–283 (STPS…GKIR) and 364–384 (KSSI…FEEN). The segment covering 180 to 228 (RLAEHLENSKKTILQHDNKEEDKEIHSEENETKDEIKSEKKEPEIKKQE) has biased composition (basic and acidic residues). The span at 229–241 (GGSSTEKVGQPSS) shows a compositional bias: polar residues.

As to quaternary structure, interacts with rap1.

It is found in the cytoplasm. The protein resides in the nucleus. It localises to the nucleus inner membrane. In terms of biological role, connects telomeres to the nuclear envelop (NE) during both vegetative growth and meiosis. This connection ensures clustering of telomeres to the spindle pole body (SPB) when cells enter meiotic prophase. In Schizosaccharomyces pombe (strain 972 / ATCC 24843) (Fission yeast), this protein is Bouquet formation protein 4 (bqt4).